A 232-amino-acid chain; its full sequence is Zinc-finger homeodomain protein 5 (232 aa).

A compositionally biased stretch (acidic residues) spans 1–11 (MELSEHEEDAG). Residues 1–25 (MELSEHEEDAGDVGGGCSSPPTPPH) form a disordered region. Residues 40–86 (YHECLRNHAAASGGHVVDGCGEFMPASTEEPLACAACGCHRSFHRRD) form a ZF-HD dimerization-type; degenerate zinc finger. The disordered stretch occupies residues 126 to 170 (GLPFPGYGTPSGGTGTTTASSSDERLRPSPVQPRRRSRTTFTREQ). Positions 159–222 (RRRSRTTFTR…NNKHSFKQKQ (64 aa)) form a DNA-binding region, homeobox.

Homo- and heterodimer with other ZFHD proteins.

The protein localises to the nucleus. In terms of biological role, putative transcription factor. The polypeptide is Zinc-finger homeodomain protein 5 (ZHD5) (Oryza sativa subsp. japonica (Rice)).